A 209-amino-acid polypeptide reads, in one-letter code: Large ribosomal subunit protein uL3 (209 aa).

Residues 127 to 166 (NFGGGSRTHGQSDRLRAPGSVGGSSDPSRTFKGTRMAGRM) are disordered.

It belongs to the universal ribosomal protein uL3 family. In terms of assembly, part of the 50S ribosomal subunit. Forms a cluster with proteins L14 and L19.

In terms of biological role, one of the primary rRNA binding proteins, it binds directly near the 3'-end of the 23S rRNA, where it nucleates assembly of the 50S subunit. The sequence is that of Large ribosomal subunit protein uL3 from Chlorobaculum tepidum (strain ATCC 49652 / DSM 12025 / NBRC 103806 / TLS) (Chlorobium tepidum).